The primary structure comprises 663 residues: Pyoverdine export ATP-binding/permease protein PvdT (663 aa).

The ABC transporter domain maps to 11-250 (IELRDIRKRY…PSAGVERHLQ (240 aa)). 48–55 (GASGSGKS) serves as a coordination point for ATP. 4 consecutive transmembrane segments (helical) span residues 292 to 312 (ALTL…LAVG), 545 to 565 (IAAI…LMTV), 598 to 618 (VVGG…LLLG), and 626 to 646 (LSAI…FGFM).

The protein belongs to the ABC transporter superfamily. Macrolide exporter (TC 3.A.1.122) family. As to quaternary structure, part of the tripartite efflux system PvdRT-OpmQ, which is composed of an inner membrane component with both ATPase and permease domains, PvdT, a periplasmic membrane fusion protein, PvdR, and an outer membrane component, OpmQ.

It is found in the cell inner membrane. Part of the tripartite efflux system PvdRT-OpmQ required for the secretion into the extracellular milieu of the siderophore pyoverdine (PVD), which is involved in iron acquisition. This subunit binds PVD and drives its secretion by hydrolyzing ATP. The system is responsible for export of newly synthesized PVD after the final steps of biosynthesis have taken place in the periplasm. It is also responsible for recycling of PVD after internalization of ferri-PVD into the periplasm by the outer-membrane receptor FpvA and release of iron from PVD, thus making PVD available for new cycles of iron uptake. In addition, can expel unwanted metals complexed with PVD from the periplasm into the extracellular medium. This is Pyoverdine export ATP-binding/permease protein PvdT from Pseudomonas aeruginosa (strain ATCC 15692 / DSM 22644 / CIP 104116 / JCM 14847 / LMG 12228 / 1C / PRS 101 / PAO1).